The following is a 130-amino-acid chain: Small ribosomal subunit protein uS11 (130 aa).

It belongs to the universal ribosomal protein uS11 family. In terms of assembly, part of the 30S ribosomal subunit. Interacts with proteins S7 and S18. Binds to IF-3.

Its function is as follows. Located on the platform of the 30S subunit, it bridges several disparate RNA helices of the 16S rRNA. Forms part of the Shine-Dalgarno cleft in the 70S ribosome. This chain is Small ribosomal subunit protein uS11, found in Synechococcus sp. (strain CC9902).